The following is a 382-amino-acid chain: GDP-mannose transporter (382 aa).

Residues 1-40 (MADDKKTNEYTIEMDKLDHGNKDFEAPAPAVRPRGPPVAQ) are Cytoplasmic-facing. Residues 41–61 (LANNPILPVLAYCGSSILMTV) form a helical membrane-spanning segment. The Lumenal portion of the chain corresponds to 62 to 71 (MNKYVLSGRD). A helical membrane pass occupies residues 72–92 (FNLNFFLLCVQSIVCIVAIQT). Residues 93-110 (CKVSKLITYRDFNSDEAK) are Cytoplasmic-facing. The helical transmembrane segment at 111-127 (KWFPITLLLIGMIYTGS) threads the bilayer. Topologically, residues 128-134 (KALQYLS) are lumenal. Residues 135–151 (IPVYTIFKNLTIILIAY) traverse the membrane as a helical segment. Over 152 to 160 (GEVLWFGGS) the chain is Cytoplasmic. The helical transmembrane segment at 161–182 (VTGLTLFSFGLMVLSSIIAAWA) threads the bilayer. Over 183-200 (DIKHAVESSGDATAKVST) the chain is Lumenal. Residues 201–221 (LNAGYIWMLINCLCTSSYVLG) traverse the membrane as a helical segment. The Cytoplasmic portion of the chain corresponds to 222-233 (MRKRIKLTNFKD). A helical transmembrane segment spans residues 234 to 254 (FDTMFYNNLLSIPVLLVLTFL). Residues 255–274 (MEDWSSANIARNFPSTDRNG) lie on the Lumenal side of the membrane. The helical transmembrane segment at 275-295 (ILFAMILSGLSSVFISYTSAW) threads the bilayer. At 296-303 (CVRVTSST) the chain is on the cytoplasmic side. The helical transmembrane segment at 304–324 (TYSMVGALNKLPIALSGLIFF) threads the bilayer. Residues 325–327 (DAP) lie on the Lumenal side of the membrane. Residues 328–348 (VTFPSVSAIVVGFISGIVYAV) traverse the membrane as a helical segment. Residues 349 to 382 (AKIKQSAKPKTGVLPMSNPPVSASSQSMRDSLRS) are Cytoplasmic-facing. The tract at residues 358–382 (KTGVLPMSNPPVSASSQSMRDSLRS) is disordered. The segment covering 367 to 382 (PPVSASSQSMRDSLRS) has biased composition (polar residues).

The protein belongs to the TPT transporter family. SLC35D subfamily. In terms of assembly, homooligomer.

It localises to the golgi apparatus membrane. It is found in the cytoplasmic vesicle membrane. The protein resides in the endoplasmic reticulum membrane. In terms of biological role, involved in the import of GDP-mannose from the cytoplasm into the Golgi lumen. This chain is GDP-mannose transporter (gmt1), found in Aspergillus fumigatus (strain CBS 144.89 / FGSC A1163 / CEA10) (Neosartorya fumigata).